Reading from the N-terminus, the 161-residue chain is Nucleoside diphosphate kinase (161 aa).

Lysine 13, phenylalanine 61, arginine 89, threonine 95, arginine 106, and asparagine 116 together coordinate ATP. Histidine 119 acts as the Pros-phosphohistidine intermediate in catalysis.

Belongs to the NDK family. Requires Mg(2+) as cofactor.

The protein resides in the cytoplasm. The catalysed reaction is a 2'-deoxyribonucleoside 5'-diphosphate + ATP = a 2'-deoxyribonucleoside 5'-triphosphate + ADP. It catalyses the reaction a ribonucleoside 5'-diphosphate + ATP = a ribonucleoside 5'-triphosphate + ADP. Its function is as follows. Major role in the synthesis of nucleoside triphosphates other than ATP. The ATP gamma phosphate is transferred to the NDP beta phosphate via a ping-pong mechanism, using a phosphorylated active-site intermediate. The chain is Nucleoside diphosphate kinase from Halobacterium salinarum (strain ATCC 29341 / DSM 671 / R1).